We begin with the raw amino-acid sequence, 133 residues long: Small ribosomal subunit protein uS11 (133 aa).

The protein belongs to the universal ribosomal protein uS11 family. In terms of assembly, part of the 30S ribosomal subunit.

Its function is as follows. Located on the platform of the 30S subunit. This is Small ribosomal subunit protein uS11 from Pyrobaculum aerophilum (strain ATCC 51768 / DSM 7523 / JCM 9630 / CIP 104966 / NBRC 100827 / IM2).